The chain runs to 1047 residues: Exportin-6 (1047 aa).

The region spanning 32–98 is the Importin N-terminal domain; sequence IDTILNNYKA…KGLLLDIYLN (67 aa).

The protein belongs to the exportin family.

The protein resides in the nucleus. It is found in the cytoplasm. Probably mediates the nuclear export of actin and profilin-actin complexes. The polypeptide is Exportin-6 (xpo6) (Dictyostelium discoideum (Social amoeba)).